Consider the following 211-residue polypeptide: Large ribosomal subunit protein eL13 (211 aa).

The residue at position 16 (Lys-16) is an N6-acetyllysine. 3 positions are modified to phosphoserine: Ser-52, Ser-77, and Ser-106. Glycyl lysine isopeptide (Lys-Gly) (interchain with G-Cter in SUMO2) cross-links involve residues Lys-123 and Lys-145. Lys-174 is covalently cross-linked (Glycyl lysine isopeptide (Lys-Gly) (interchain with G-Cter in SUMO1); alternate). Glycyl lysine isopeptide (Lys-Gly) (interchain with G-Cter in SUMO2); alternate cross-links involve residues Lys-174 and Lys-177. Lys-177 bears the N6-acetyllysine; alternate mark.

The protein belongs to the eukaryotic ribosomal protein eL13 family. In terms of assembly, component of the 60S large ribosomal subunit (LSU). Higher levels of expression in benign breast lesions than in carcinomas.

The protein resides in the cytoplasm. Functionally, component of the ribosome, a large ribonucleoprotein complex responsible for the synthesis of proteins in the cell. The small ribosomal subunit (SSU) binds messenger RNAs (mRNAs) and translates the encoded message by selecting cognate aminoacyl-transfer RNA (tRNA) molecules. The large subunit (LSU) contains the ribosomal catalytic site termed the peptidyl transferase center (PTC), which catalyzes the formation of peptide bonds, thereby polymerizing the amino acids delivered by tRNAs into a polypeptide chain. The nascent polypeptides leave the ribosome through a tunnel in the LSU and interact with protein factors that function in enzymatic processing, targeting, and the membrane insertion of nascent chains at the exit of the ribosomal tunnel. As part of the LSU, it is probably required for its formation and the maturation of rRNAs. Plays a role in bone development. The sequence is that of Large ribosomal subunit protein eL13 (RPL13) from Homo sapiens (Human).